We begin with the raw amino-acid sequence, 423 residues long: Kynureninase (423 aa).

Pyridoxal 5'-phosphate is bound by residues leucine 105, serine 106, 133–136 (FPSD), aspartate 218, histidine 221, and tyrosine 243. Lysine 244 carries the N6-(pyridoxal phosphate)lysine modification. Positions 273 and 301 each coordinate pyridoxal 5'-phosphate.

Belongs to the kynureninase family. Homodimer. It depends on pyridoxal 5'-phosphate as a cofactor.

It catalyses the reaction L-kynurenine + H2O = anthranilate + L-alanine + H(+). The catalysed reaction is 3-hydroxy-L-kynurenine + H2O = 3-hydroxyanthranilate + L-alanine + H(+). It functions in the pathway amino-acid degradation; L-kynurenine degradation; L-alanine and anthranilate from L-kynurenine: step 1/1. It participates in cofactor biosynthesis; NAD(+) biosynthesis; quinolinate from L-kynurenine: step 2/3. Functionally, catalyzes the cleavage of L-kynurenine (L-Kyn) and L-3-hydroxykynurenine (L-3OHKyn) into anthranilic acid (AA) and 3-hydroxyanthranilic acid (3-OHAA), respectively. The sequence is that of Kynureninase from Xanthomonas euvesicatoria pv. vesicatoria (strain 85-10) (Xanthomonas campestris pv. vesicatoria).